Reading from the N-terminus, the 122-residue chain is uncharacterized protein (122 aa).

It is found in the mitochondrion. This is an uncharacterized protein from Arabidopsis thaliana (Mouse-ear cress).